Here is a 301-residue protein sequence, read N- to C-terminus: 33 kDa chaperonin (301 aa).

2 cysteine pairs are disulfide-bonded: cysteine 240–cysteine 242 and cysteine 273–cysteine 276.

This sequence belongs to the HSP33 family. In terms of processing, under oxidizing conditions two disulfide bonds are formed involving the reactive cysteines. Under reducing conditions zinc is bound to the reactive cysteines and the protein is inactive.

It is found in the cytoplasm. Redox regulated molecular chaperone. Protects both thermally unfolding and oxidatively damaged proteins from irreversible aggregation. Plays an important role in the bacterial defense system toward oxidative stress. The protein is 33 kDa chaperonin of Rippkaea orientalis (strain PCC 8801 / RF-1) (Cyanothece sp. (strain PCC 8801)).